An 873-amino-acid chain; its full sequence is E3 ubiquitin-protein ligase UPL5 (873 aa).

Polar residues predominate over residues 1–19 (MTLSRSSADDSTNNANRSY). Disordered regions lie at residues 1-37 (MTLS…DSSD) and 70-90 (RSGE…SNRP). The Ubiquitin-like domain occupies 95 to 171 (LQIFVRMMSG…LQLVARMQST (77 aa)). Residues 272-296 (CLPIVLEFCKLLRKVCPDQKLYVTC) enclose the C-type lectin domain. Residues 532–873 (SPEALHGGLF…DHVSSSFGKW (342 aa)) enclose the HECT domain. The Glycyl thioester intermediate role is filled by cysteine 839.

Belongs to the UPL family. As to quaternary structure, interacts with WRKY53.

It localises to the cytoplasm. The catalysed reaction is S-ubiquitinyl-[E2 ubiquitin-conjugating enzyme]-L-cysteine + [acceptor protein]-L-lysine = [E2 ubiquitin-conjugating enzyme]-L-cysteine + N(6)-ubiquitinyl-[acceptor protein]-L-lysine.. Its pathway is protein modification; protein ubiquitination. Its function is as follows. E3 ubiquitin protein ligase that regulates leaf senescence through ubiquitination and subsequent degradation of WRKY53. The sequence is that of E3 ubiquitin-protein ligase UPL5 (UPL5) from Arabidopsis thaliana (Mouse-ear cress).